A 277-amino-acid chain; its full sequence is NADPH-dependent 7-cyano-7-deazaguanine reductase (277 aa).

A substrate-binding site is contributed by 86–88 (IES). Residue 88 to 89 (SK) participates in NADPH binding. C185 acts as the Thioimide intermediate in catalysis. Catalysis depends on D192, which acts as the Proton donor. 224–225 (HE) is a binding site for substrate. Residue 253–254 (RG) coordinates NADPH.

The protein belongs to the GTP cyclohydrolase I family. QueF type 2 subfamily. As to quaternary structure, homodimer.

It localises to the cytoplasm. The catalysed reaction is 7-aminomethyl-7-carbaguanine + 2 NADP(+) = 7-cyano-7-deazaguanine + 2 NADPH + 3 H(+). It functions in the pathway tRNA modification; tRNA-queuosine biosynthesis. Functionally, catalyzes the NADPH-dependent reduction of 7-cyano-7-deazaguanine (preQ0) to 7-aminomethyl-7-deazaguanine (preQ1). This chain is NADPH-dependent 7-cyano-7-deazaguanine reductase, found in Hydrogenovibrio crunogenus (strain DSM 25203 / XCL-2) (Thiomicrospira crunogena).